Reading from the N-terminus, the 711-residue chain is Polyribonucleotide nucleotidyltransferase (711 aa).

Asp486 and Asp492 together coordinate Mg(2+). A KH domain is found at Pro553 to Ile612. An S1 motif domain is found at Gly622–Lys690. Residues Lys690–Glu711 form a disordered region. The span at Glu694–Glu711 shows a compositional bias: low complexity.

The protein belongs to the polyribonucleotide nucleotidyltransferase family. In terms of assembly, component of the RNA degradosome, which is a multiprotein complex involved in RNA processing and mRNA degradation. Mg(2+) serves as cofactor.

It is found in the cytoplasm. It carries out the reaction RNA(n+1) + phosphate = RNA(n) + a ribonucleoside 5'-diphosphate. Its function is as follows. Involved in mRNA degradation. Catalyzes the phosphorolysis of single-stranded polyribonucleotides processively in the 3'- to 5'-direction. In Salmonella choleraesuis (strain SC-B67), this protein is Polyribonucleotide nucleotidyltransferase.